Here is a 145-residue protein sequence, read N- to C-terminus: Ribosomal RNA large subunit methyltransferase H (145 aa).

Residues leucine 64, glycine 93, and 112-117 (LSPLTF) contribute to the S-adenosyl-L-methionine site.

Belongs to the RNA methyltransferase RlmH family. As to quaternary structure, homodimer.

Its subcellular location is the cytoplasm. The catalysed reaction is pseudouridine(1915) in 23S rRNA + S-adenosyl-L-methionine = N(3)-methylpseudouridine(1915) in 23S rRNA + S-adenosyl-L-homocysteine + H(+). In terms of biological role, specifically methylates the pseudouridine at position 1915 (m3Psi1915) in 23S rRNA. The chain is Ribosomal RNA large subunit methyltransferase H from Prochlorococcus marinus (strain MIT 9211).